The chain runs to 451 residues: Ribosomal protein uS12 methylthiotransferase RimO (451 aa).

In terms of domain architecture, MTTase N-terminal spans 17–127 (PTIGFVSLGC…VLAQVHEHLP (111 aa)). [4Fe-4S] cluster-binding residues include Cys26, Cys62, Cys91, Cys160, Cys164, and Cys167. One can recognise a Radical SAM core domain in the interval 146 to 383 (LTPRHYAYLK…MQLQQRISTE (238 aa)). Residues 386–451 (KQKVGQTLPV…DEYDLWGTRV (66 aa)) form the TRAM domain.

This sequence belongs to the methylthiotransferase family. RimO subfamily. [4Fe-4S] cluster is required as a cofactor.

It is found in the cytoplasm. It catalyses the reaction L-aspartate(89)-[ribosomal protein uS12]-hydrogen + (sulfur carrier)-SH + AH2 + 2 S-adenosyl-L-methionine = 3-methylsulfanyl-L-aspartate(89)-[ribosomal protein uS12]-hydrogen + (sulfur carrier)-H + 5'-deoxyadenosine + L-methionine + A + S-adenosyl-L-homocysteine + 2 H(+). Its function is as follows. Catalyzes the methylthiolation of an aspartic acid residue of ribosomal protein uS12. The polypeptide is Ribosomal protein uS12 methylthiotransferase RimO (Cellvibrio japonicus (strain Ueda107) (Pseudomonas fluorescens subsp. cellulosa)).